We begin with the raw amino-acid sequence, 177 residues long: 3-hydroxydecanoyl-[acyl-carrier-protein] dehydratase (177 aa).

The active site involves His-71.

It belongs to the thioester dehydratase family. FabA subfamily. In terms of assembly, homodimer.

The protein resides in the cytoplasm. The catalysed reaction is a (3R)-hydroxyacyl-[ACP] = a (2E)-enoyl-[ACP] + H2O. It carries out the reaction (3R)-hydroxydecanoyl-[ACP] = (2E)-decenoyl-[ACP] + H2O. It catalyses the reaction (2E)-decenoyl-[ACP] = (3Z)-decenoyl-[ACP]. It functions in the pathway lipid metabolism; fatty acid biosynthesis. Its function is as follows. Necessary for the introduction of cis unsaturation into fatty acids. Catalyzes the dehydration of (3R)-3-hydroxydecanoyl-ACP to E-(2)-decenoyl-ACP and then its isomerization to Z-(3)-decenoyl-ACP. Can catalyze the dehydratase reaction for beta-hydroxyacyl-ACPs with saturated chain lengths up to 16:0, being most active on intermediate chain length. The chain is 3-hydroxydecanoyl-[acyl-carrier-protein] dehydratase from Wigglesworthia glossinidia brevipalpis.